The sequence spans 213 residues: Putative tRNA methyltransferase MPN_351 (213 aa).

The protein belongs to the TrmK family.

It is found in the cytoplasm. The sequence is that of Putative tRNA methyltransferase MPN_351 from Mycoplasma pneumoniae (strain ATCC 29342 / M129 / Subtype 1) (Mycoplasmoides pneumoniae).